The chain runs to 592 residues: Syntaxin-binding protein 3 (592 aa).

Residues M1–Q255 are mediates interaction with DOC2B.

This sequence belongs to the STXBP/unc-18/SEC1 family. Interacts with STX4. Interacts with DOC2B; the interaction is direct, occurs at the cell membrane, excludes interaction with STX4 and regulates glucose-stimulated insulin secretion. In terms of processing, phosphorylated by PKC in platelets in response to thrombin stimulation; phosphorylation inhibits binding to STX4. Ubiquitously expressed in all tissues tested.

The protein localises to the cytoplasm. Its subcellular location is the cytosol. The protein resides in the cell membrane. Functionally, together with STX4 and VAMP2, may play a role in insulin-dependent movement of GLUT4 and in docking/fusion of intracellular GLUT4-containing vesicles with the cell surface in adipocytes. In Mus musculus (Mouse), this protein is Syntaxin-binding protein 3 (Stxbp3).